Here is a 211-residue protein sequence, read N- to C-terminus: Cell division protein SepF (211 aa).

Residues 15 to 26 show a composition bias toward acidic residues; the sequence is DTDEVNEVEEEV. The disordered stretch occupies residues 15-111; sequence DTDEVNEVEE…ETYQAQTTVQ (97 aa). Composition is skewed to polar residues over residues 44 to 57, 64 to 81, and 91 to 111; these read IPSQ…QNPA, ARSQ…PNRQ, and RESV…TTVQ.

This sequence belongs to the SepF family. Homodimer. Interacts with FtsZ.

It localises to the cytoplasm. Its function is as follows. Cell division protein that is part of the divisome complex and is recruited early to the Z-ring. Probably stimulates Z-ring formation, perhaps through the cross-linking of FtsZ protofilaments. Its function overlaps with FtsA. This chain is Cell division protein SepF, found in Streptococcus uberis (strain ATCC BAA-854 / 0140J).